The chain runs to 412 residues: Argininosuccinate synthase (412 aa).

ATP is bound at residue 10–18 (AYSGGLDTS). Tyr-89 contributes to the L-citrulline binding site. ATP is bound at residue Gly-119. L-aspartate-binding residues include Thr-121, Asn-125, and Asp-126. Asn-125 is an L-citrulline binding site. The L-citrulline site is built by Arg-129, Ser-177, Glu-261, and Tyr-273.

Belongs to the argininosuccinate synthase family. Type 1 subfamily. In terms of assembly, homotetramer.

Its subcellular location is the cytoplasm. The catalysed reaction is L-citrulline + L-aspartate + ATP = 2-(N(omega)-L-arginino)succinate + AMP + diphosphate + H(+). Its pathway is amino-acid biosynthesis; L-arginine biosynthesis; L-arginine from L-ornithine and carbamoyl phosphate: step 2/3. The protein is Argininosuccinate synthase of Bifidobacterium longum (strain NCC 2705).